Reading from the N-terminus, the 146-residue chain is UPF0306 protein CKO_04548 (146 aa).

Belongs to the UPF0306 family.

The protein is UPF0306 protein CKO_04548 of Citrobacter koseri (strain ATCC BAA-895 / CDC 4225-83 / SGSC4696).